A 1077-amino-acid chain; its full sequence is Insulin receptor substrate 2-B (1077 aa).

Residues 1-66 (MAGVLCPTEE…APASTAEDDV (66 aa)) are disordered. 2 consecutive short sequence motifs (YXXM motif) follow at residues 33 to 36 (YRRM) and 147 to 150 (YFAM). Positions 65 to 170 (DVRKRGYLRK…WYQALSELIN (106 aa)) constitute a PH domain. The IRS-type PTB domain maps to 195-299 (FKEVWQVNVK…DTMKALKAYS (105 aa)). 3 disordered regions span residues 342–373 (ETVVGTPPSAKNNSFRFRTSSEGEGTMTRPFR), 428–464 (VCSSNGHGSASETLTRPSSSSVCGSPSDGGFISSDEY), and 476–495 (VRSNTPDSLGNTPPIQEENT). Polar residues-rich tracts occupy residues 350-364 (SAKNNSFRFRTSSEG) and 428-444 (VCSSNGHGSASETLTRP). Residues 445-457 (SSSSVCGSPSDGG) show a composition bias toward low complexity. A compositionally biased stretch (polar residues) spans 477–495 (RSNTPDSLGNTPPIQEENT). The YXXM motif 3 signature appears at 499–502 (YMSM). A compositionally biased stretch (polar residues) spans 530-544 (KPTNAASQQKSQTAV). Positions 530-571 (KPTNAASQQKSQTAVSLDEDSEETNKQFAYAESPKLKDSSHV) are disordered. 6 consecutive short sequence motifs (YXXM motif) follow at residues 595 to 598 (YMPM), 608 to 611 (YLPM), 634 to 637 (YMMM), 666 to 669 (YMDM), 713 to 716 (YVPM), and 891 to 894 (YTTM).

In terms of processing, phosphorylated by INSR.

In terms of biological role, potentiates insulin signaling. The protein is Insulin receptor substrate 2-B (irs2-b) of Xenopus laevis (African clawed frog).